A 1077-amino-acid chain; its full sequence is Receptor-type guanylate cyclase daf-11 (1077 aa).

N-linked (GlcNAc...) asparagine glycans are attached at residues N14, N112, N149, and N311. A helical membrane pass occupies residues 335-355; it reads TGVIIAIAVIMGVLLMFIIIL. A Protein kinase domain is found at 355-695; sequence LTTIRKCCNG…LARKIIDTVL (341 aa). The Cytoplasmic portion of the chain corresponds to 356–1077; the sequence is TTIRKCCNGS…DSQASTIPDN (722 aa). Residues 765 to 895 enclose the Guanylate cyclase domain; it reads TILYSDIVGF…EAVILASKME (131 aa). The Mg(2+) site is built by D770, I771, and D814. The stretch at 983-1034 forms a coiled coil; it reads KDKMTLAKEKVIAERKNEEERLQRQQTLQEALEEHEEEIEMNEVLVDEDEGE. The interval 1048–1077 is disordered; the sequence is TQMEELEDEPAGRTIGHGRLDSQASTIPDN.

This sequence belongs to the adenylyl cyclase class-4/guanylyl cyclase family. Expressed in sensory neurons including ASI, ASJ, ASK, AWB and AWC. Expressed in ASJ neurons in the dauer stage.

It is found in the cell membrane. The protein localises to the cell projection. The protein resides in the dendrite. It localises to the cilium. Its subcellular location is the perikaryon. It catalyses the reaction GTP = 3',5'-cyclic GMP + diphosphate. Guanylate cyclase involved in the production of the second messenger cGMP. In addition, regulates cGMP levels by controlling the transcription of 3',5'-cyclic phosphodiesterase pde-1 and pde-5 mRNAs. Involved in the olfactory, light and pheromone sensing pathways. Part of the chemosensory mechanism of the ASJ sensory neuron that controls dauer formation and dauer recovery. Promotes the calcium flux in ASJ sensory neurons in response to onset and removal of a nitric oxide (NO) stimulus and is thereby required for the behavioral avoidance response to NO-producing organisms like P.aeruginosa. In ASI and ASJ sensory neurons, controls dauer formation and behavioral response to P.aeruginosa by up-regulating the transcription of daf-7, a member of the TGF-beta family. Required for the chemotaxis responses to non-volatile and volatile attractants mediated by the sensory neurons ASE and AWC respectively. Required in ASJ neurons for phototransduction downstream of G protein coupled-photoreceptor lite-1. Plays a role in the development of ASJ sensory neuron axons during late larval stages and in the maintenance of normal axon morphology in adults. Required to maintain the expression of putative olfactory receptor str-2 in one of the two AWC neurons in adults. Regulates, via the production of cGMP, lifespan (in some environmental conditions), sensitivity to oxidative stress and entry into quiescence triggered by satiety. In AWB and AWC sensory neurons, mediates the recognition of food odors which subsequently allows for the detection of preferred food sources. The protein is Receptor-type guanylate cyclase daf-11 of Caenorhabditis elegans.